A 221-amino-acid chain; its full sequence is 21 kDa seed protein (221 aa).

Residues 1 to 26 (MKTATAVVLLLFAFTSKSYFFGVANA) form the signal peptide. C69 and C116 are disulfide-bonded.

This sequence belongs to the protease inhibitor I3 (leguminous Kunitz-type inhibitor) family.

This chain is 21 kDa seed protein (ASP), found in Theobroma cacao (Cacao).